The following is a 185-amino-acid chain: Large ribosomal subunit protein uL5 (185 aa).

This sequence belongs to the universal ribosomal protein uL5 family. Part of the 50S ribosomal subunit; part of the 5S rRNA/L5/L18/L25 subcomplex. Contacts the 5S rRNA and the P site tRNA. Forms a bridge to the 30S subunit in the 70S ribosome.

This is one of the proteins that bind and probably mediate the attachment of the 5S RNA into the large ribosomal subunit, where it forms part of the central protuberance. In the 70S ribosome it contacts protein S13 of the 30S subunit (bridge B1b), connecting the 2 subunits; this bridge is implicated in subunit movement. Contacts the P site tRNA; the 5S rRNA and some of its associated proteins might help stabilize positioning of ribosome-bound tRNAs. This chain is Large ribosomal subunit protein uL5, found in Rhodopseudomonas palustris (strain BisB5).